Consider the following 258-residue polypeptide: Regulatory protein RecX (258 aa).

The protein belongs to the RecX family.

The protein resides in the cytoplasm. Its function is as follows. Modulates RecA activity. The chain is Regulatory protein RecX from Streptococcus thermophilus (strain CNRZ 1066).